The sequence spans 127 residues: Ribonuclease P protein component 1 (127 aa).

The protein belongs to the eukaryotic/archaeal RNase P protein component 1 family. Consists of a catalytic RNA component and at least 4 protein subunits. Forms a subcomplex with Rnp4 which stimulates the catalytic RNA.

Its subcellular location is the cytoplasm. The catalysed reaction is Endonucleolytic cleavage of RNA, removing 5'-extranucleotides from tRNA precursor.. Its function is as follows. Part of ribonuclease P, a protein complex that generates mature tRNA molecules by cleaving their 5'-ends. The RNA is catalytic, but its KM for pre-tRNA is 170-fold decreased in the presence of the 4 known protein subunits (Rnp1-4). The protein subunits also decrease the amount of Mg(2+) needed for activity. The polypeptide is Ribonuclease P protein component 1 (Pyrococcus furiosus (strain ATCC 43587 / DSM 3638 / JCM 8422 / Vc1)).